Reading from the N-terminus, the 442-residue chain is Protein PRRC1-A (442 aa).

Positions 1–27 are disordered; sequence MMEESGIETTPPSTPPPSTIGTSVPAA.

It belongs to the PRRC1 family.

The protein resides in the golgi apparatus. This is Protein PRRC1-A (prrc1-a) from Xenopus laevis (African clawed frog).